The following is a 337-amino-acid chain: Ribosomal RNA small subunit methyltransferase H (337 aa).

Residues 36–38, D56, F82, D100, and Q107 each bind S-adenosyl-L-methionine; that span reads GGH. Positions 317–337 are disordered; it reads RRSGRIPNPQSPIPASQGDAR.

It belongs to the methyltransferase superfamily. RsmH family.

Its subcellular location is the cytoplasm. The catalysed reaction is cytidine(1402) in 16S rRNA + S-adenosyl-L-methionine = N(4)-methylcytidine(1402) in 16S rRNA + S-adenosyl-L-homocysteine + H(+). In terms of biological role, specifically methylates the N4 position of cytidine in position 1402 (C1402) of 16S rRNA. This Xanthomonas oryzae pv. oryzae (strain KACC10331 / KXO85) protein is Ribosomal RNA small subunit methyltransferase H.